We begin with the raw amino-acid sequence, 835 residues long: uncharacterized protein (835 aa).

This is an uncharacterized protein from Mycoplasma genitalium (strain ATCC 33530 / DSM 19775 / NCTC 10195 / G37) (Mycoplasmoides genitalium).